The primary structure comprises 347 residues: UDP-galactose/UDP-glucose transporter 5 (347 aa).

8 helical membrane passes run 17-37, 57-77, 116-136, 143-163, 177-197, 218-238, 247-267, and 293-313; these read LWKA…YGLL, LFLV…ALLA, VQTL…TLIM, FDYL…LFPA, TVWG…TSTF, ICSS…LPAV, CLFD…FISY, and CIWF…IVFG. Positions 325 to 347 are disordered; the sequence is SEKPPAAQELPRDEEAQPLKGNP.

Belongs to the nucleotide-sugar transporter family. UDP-galactose:UMP antiporter (TC 2.A.7.11) subfamily.

It localises to the membrane. In terms of biological role, sugar transporter involved in the transport of nucleotide-sugars from cytoplasm into the Golgi and/or the endoplasmic reticulum. The chain is UDP-galactose/UDP-glucose transporter 5 from Arabidopsis thaliana (Mouse-ear cress).